The primary structure comprises 621 residues: 1-deoxy-D-xylulose-5-phosphate synthase (621 aa).

Residues His80 and 121 to 123 contribute to the thiamine diphosphate site; that span reads GHS. A Mg(2+)-binding site is contributed by Asp152. Residues 153-154, Asn181, Tyr288, and Glu370 contribute to the thiamine diphosphate site; that span reads GA. Asn181 serves as a coordination point for Mg(2+).

Belongs to the transketolase family. DXPS subfamily. As to quaternary structure, homodimer. Mg(2+) serves as cofactor. Requires thiamine diphosphate as cofactor.

The catalysed reaction is D-glyceraldehyde 3-phosphate + pyruvate + H(+) = 1-deoxy-D-xylulose 5-phosphate + CO2. The protein operates within metabolic intermediate biosynthesis; 1-deoxy-D-xylulose 5-phosphate biosynthesis; 1-deoxy-D-xylulose 5-phosphate from D-glyceraldehyde 3-phosphate and pyruvate: step 1/1. Functionally, catalyzes the acyloin condensation reaction between C atoms 2 and 3 of pyruvate and glyceraldehyde 3-phosphate to yield 1-deoxy-D-xylulose-5-phosphate (DXP). The sequence is that of 1-deoxy-D-xylulose-5-phosphate synthase from Vibrio parahaemolyticus serotype O3:K6 (strain RIMD 2210633).